The sequence spans 526 residues: Opine oxidase subunit A (526 aa).

[2Fe-2S] cluster contacts are provided by Cys-396, Cys-398, Cys-431, and Cys-436.

This sequence to T-protein and to dimethylglycine dehydrogenase. Heterodimer of a subunit A and a subunit B. [2Fe-2S] cluster serves as cofactor.

It functions in the pathway opine metabolism; octopine degradation. Functionally, oxidative cleavage of octopine into L-arginine and pyruvate. The polypeptide is Opine oxidase subunit A (ooxA) (Rhizobium meliloti (Ensifer meliloti)).